The primary structure comprises 312 residues: Malate dehydrogenase (312 aa).

NAD(+)-binding positions include 7-13 and Asp34; that span reads GAAGGIG. Substrate is bound by residues Arg81 and Arg87. Residues Asn94 and 117-119 contribute to the NAD(+) site; that span reads ITN. Residues Asn119 and Arg153 each coordinate substrate. His177 acts as the Proton acceptor in catalysis. Met227 serves as a coordination point for NAD(+).

The protein belongs to the LDH/MDH superfamily. MDH type 1 family. In terms of assembly, homodimer.

It carries out the reaction (S)-malate + NAD(+) = oxaloacetate + NADH + H(+). Functionally, catalyzes the reversible oxidation of malate to oxaloacetate. This chain is Malate dehydrogenase, found in Shigella flexneri serotype 5b (strain 8401).